A 156-amino-acid chain; its full sequence is Small ribosomal subunit protein uS7 (156 aa).

It belongs to the universal ribosomal protein uS7 family. Part of the 30S ribosomal subunit. Contacts proteins S9 and S11.

Functionally, one of the primary rRNA binding proteins, it binds directly to 16S rRNA where it nucleates assembly of the head domain of the 30S subunit. Is located at the subunit interface close to the decoding center, probably blocks exit of the E-site tRNA. The protein is Small ribosomal subunit protein uS7 of Treponema pallidum (strain Nichols).